The following is a 420-amino-acid chain: Glycerol-3-phosphate dehydrogenase [NAD(+)] 2, chloroplastic (420 aa).

The N-terminal 45 residues, 1–45 (MAASVQPACLDLHFSGKHPPLLKHNAIIVRCVSSPNVIPEADSIS), are a transit peptide targeting the chloroplast. Residues 94–99 (GGGSFG), phenylalanine 171, lysine 194, and alanine 228 each bind NAD(+). Residue lysine 194 participates in substrate binding. Lysine 279 (proton acceptor) is an active-site residue. NAD(+) contacts are provided by arginine 343 and glutamate 369. A substrate-binding site is contributed by 343–344 (RN).

It belongs to the NAD-dependent glycerol-3-phosphate dehydrogenase family.

The protein resides in the plastid. The protein localises to the chloroplast. The enzyme catalyses sn-glycerol 3-phosphate + NAD(+) = dihydroxyacetone phosphate + NADH + H(+). The protein operates within membrane lipid metabolism; glycerophospholipid metabolism. Functionally, required to supply glycerol-3-phosphate in the chloroplast for the synthesis of glycerolipids. Required for activation of systemic acquired resistance (SAR). Provision of glycerol-3-phosphate may be involved in generating lipid signals necessary for mediating defense responses and SAR. This is Glycerol-3-phosphate dehydrogenase [NAD(+)] 2, chloroplastic (GLY1) from Arabidopsis thaliana (Mouse-ear cress).